Here is a 331-residue protein sequence, read N- to C-terminus: Fructose-1,6-bisphosphatase class 1 (331 aa).

E88, D108, L110, and D111 together coordinate Mg(2+). Residues 111–114 (DGSS) and N201 each bind substrate. Residue E273 participates in Mg(2+) binding.

This sequence belongs to the FBPase class 1 family. Homotetramer. Mg(2+) serves as cofactor.

Its subcellular location is the cytoplasm. It catalyses the reaction beta-D-fructose 1,6-bisphosphate + H2O = beta-D-fructose 6-phosphate + phosphate. Its pathway is carbohydrate biosynthesis; gluconeogenesis. This Methylobacillus flagellatus (strain ATCC 51484 / DSM 6875 / VKM B-1610 / KT) protein is Fructose-1,6-bisphosphatase class 1.